Reading from the N-terminus, the 147-residue chain is Glucosamine 6-phosphate N-acetyltransferase (147 aa).

One can recognise an N-acetyltransferase domain in the interval 7 to 147 (LELRVLEESD…AHERQMRLDL (141 aa)). D-glucosamine 6-phosphate-binding positions include Thr28 and 86-88 (EDV). Acetyl-CoA-binding positions include 88 to 90 (VVV) and 96 to 101 (GAGLGK). D-glucosamine 6-phosphate contacts are provided by residues 117 to 118 (YK) and Asp122. An acetyl-CoA-binding site is contributed by 131–133 (YEK).

This sequence belongs to the acetyltransferase family. GNA1 subfamily. As to quaternary structure, homodimer. In terms of processing, contains poly-N-acetyllactosamines.

It localises to the glycosome. The enzyme catalyses D-glucosamine 6-phosphate + acetyl-CoA = N-acetyl-D-glucosamine 6-phosphate + CoA + H(+). It functions in the pathway nucleotide-sugar biosynthesis; UDP-N-acetyl-alpha-D-glucosamine biosynthesis; N-acetyl-alpha-D-glucosamine 1-phosphate from alpha-D-glucosamine 6-phosphate (route I): step 1/2. In terms of biological role, involved in the biosynthesis of UDP-N-acetyl-alpha-D-glucosamine. Catalyzes the formation of N-acetyl-D-glucosamine 6-phosphate from acetyl-coenzyme A (acetyl-CoA) and D-glucosamine 6-phosphate. The protein is Glucosamine 6-phosphate N-acetyltransferase of Trypanosoma brucei brucei.